A 271-amino-acid polypeptide reads, in one-letter code: Phosphate import ATP-binding protein PstB (271 aa).

One can recognise an ABC transporter domain in the interval 25 to 266 (VDVRQLSLWY…PKHPYTEAYI (242 aa)). 57 to 64 (GPSGCGKS) contacts ATP.

This sequence belongs to the ABC transporter superfamily. Phosphate importer (TC 3.A.1.7) family. As to quaternary structure, the complex is composed of two ATP-binding proteins (PstB), two transmembrane proteins (PstC and PstA) and a solute-binding protein (PstS).

It localises to the cell inner membrane. It carries out the reaction phosphate(out) + ATP + H2O = ADP + 2 phosphate(in) + H(+). Its function is as follows. Part of the ABC transporter complex PstSACB involved in phosphate import. Responsible for energy coupling to the transport system. The polypeptide is Phosphate import ATP-binding protein PstB (Thermus thermophilus (strain ATCC BAA-163 / DSM 7039 / HB27)).